Here is a 711-residue protein sequence, read N- to C-terminus: Polyribonucleotide nucleotidyltransferase (711 aa).

Mg(2+) contacts are provided by Asp-486 and Asp-492. The KH domain maps to 553 to 612; it reads PRIHTIKINPDKIKDVIGKGGSVIRALTEETGTTIEIEDDGTVKIAATDGEKAKHAIRRI. Residues 622–690 enclose the S1 motif domain; the sequence is GRVYTGKVTR…RQGRIRLSIK (69 aa). A disordered region spans residues 689 to 711; that stretch reads IKEATEQSQPAAAPEAPAAEQGE. Low complexity predominate over residues 694-711; that stretch reads EQSQPAAAPEAPAAEQGE.

It belongs to the polyribonucleotide nucleotidyltransferase family. As to quaternary structure, component of the RNA degradosome, which is a multiprotein complex involved in RNA processing and mRNA degradation. Mg(2+) serves as cofactor.

It localises to the cytoplasm. The catalysed reaction is RNA(n+1) + phosphate = RNA(n) + a ribonucleoside 5'-diphosphate. Involved in mRNA degradation. Catalyzes the phosphorolysis of single-stranded polyribonucleotides processively in the 3'- to 5'-direction. This Shigella boydii serotype 4 (strain Sb227) protein is Polyribonucleotide nucleotidyltransferase.